A 202-amino-acid polypeptide reads, in one-letter code: Tumor necrosis factor alpha-induced protein 8-like protein 3 (202 aa).

A compositionally biased stretch (acidic residues) spans 1–10 (MDTDSGDLSE). A disordered region spans residues 1 to 24 (MDTDSGDLSEGELSPGPEQFSSKS).

It belongs to the TNFAIP8 family.

It localises to the cytoplasm. The protein resides in the cell membrane. Functionally, may act as a lipid transfer protein. The protein is Tumor necrosis factor alpha-induced protein 8-like protein 3 (tnfaip8l3) of Xenopus laevis (African clawed frog).